Reading from the N-terminus, the 290-residue chain is MYG1 protein CPn_0489/CP_0265/CPj0489/CpB0509 (290 aa).

This sequence belongs to the MYG1 family.

The chain is MYG1 protein CPn_0489/CP_0265/CPj0489/CpB0509 from Chlamydia pneumoniae (Chlamydophila pneumoniae).